The sequence spans 146 residues: Large ribosomal subunit protein uL15 (146 aa).

A disordered region spans residues 1 to 54; that stretch reads MKLHELQPAAGSRKAPKRVGRGTGSGLGRNAGKGEKGQNARSGGGVRPGFEGGQ. Composition is skewed to gly residues over residues 21–31 and 42–52; these read RGTGSGLGRNA and SGGGVRPGFEG.

The protein belongs to the universal ribosomal protein uL15 family. Part of the 50S ribosomal subunit.

Functionally, binds to the 23S rRNA. This chain is Large ribosomal subunit protein uL15, found in Clostridium botulinum (strain Eklund 17B / Type B).